The primary structure comprises 208 residues: FMN-dependent NADH:quinone oxidoreductase 1 (208 aa).

17–19 (SVS) lines the FMN pocket.

This sequence belongs to the azoreductase type 1 family. As to quaternary structure, homodimer. The cofactor is FMN.

It catalyses the reaction 2 a quinone + NADH + H(+) = 2 a 1,4-benzosemiquinone + NAD(+). The enzyme catalyses N,N-dimethyl-1,4-phenylenediamine + anthranilate + 2 NAD(+) = 2-(4-dimethylaminophenyl)diazenylbenzoate + 2 NADH + 2 H(+). Its function is as follows. Quinone reductase that provides resistance to thiol-specific stress caused by electrophilic quinones. In terms of biological role, also exhibits azoreductase activity. Catalyzes the reductive cleavage of the azo bond in aromatic azo compounds to the corresponding amines. The protein is FMN-dependent NADH:quinone oxidoreductase 1 of Listeria monocytogenes serotype 4b (strain F2365).